A 339-amino-acid chain; its full sequence is MKIYYEKDADISLIQKLKVAVVGYGSQGHAHALNLKDSGVKQIKVALQEGSASRKKAEAAGLEVVSVADAAKWADVLMILVPDEKQAVLYANEIEPHLRAGQHLMFGHGFNIHYNLIRPRADVDVSLSAPKGPGHTLRNQYQMGFGLPGLIAIHQDATGSAQAVALSYSKAIGNTRAGVIETSFREETETDLFGEQAVLCGGIVELIKAGYETLVEAGYAPEMAYFECLHETKLIVDLIYEGGIANMNYSISNTAEYGEYVTGPRLVNAETKKEMKKVLEDIQNGTFARNWVLENQAGAPGFHAMRQRMSSHPIEEVGEKLRGMMHWAQNDRLVDKSRN.

In terms of domain architecture, KARI N-terminal Rossmann spans 1–182 (MKIYYEKDAD…GNTRAGVIET (182 aa)). Residues 24–27 (YGSQ), Ser51, Ser53, and 83–86 (DEKQ) contribute to the NADP(+) site. His108 is a catalytic residue. Gly134 contacts NADP(+). Residues 183–328 (SFREETETDL…EKLRGMMHWA (146 aa)) enclose the KARI C-terminal knotted domain. Residues Asp191, Glu195, Glu227, and Glu231 each contribute to the Mg(2+) site. Ser252 contributes to the substrate binding site.

It belongs to the ketol-acid reductoisomerase family. It depends on Mg(2+) as a cofactor.

It catalyses the reaction (2R)-2,3-dihydroxy-3-methylbutanoate + NADP(+) = (2S)-2-acetolactate + NADPH + H(+). The catalysed reaction is (2R,3R)-2,3-dihydroxy-3-methylpentanoate + NADP(+) = (S)-2-ethyl-2-hydroxy-3-oxobutanoate + NADPH + H(+). It functions in the pathway amino-acid biosynthesis; L-isoleucine biosynthesis; L-isoleucine from 2-oxobutanoate: step 2/4. It participates in amino-acid biosynthesis; L-valine biosynthesis; L-valine from pyruvate: step 2/4. In terms of biological role, involved in the biosynthesis of branched-chain amino acids (BCAA). Catalyzes an alkyl-migration followed by a ketol-acid reduction of (S)-2-acetolactate (S2AL) to yield (R)-2,3-dihydroxy-isovalerate. In the isomerase reaction, S2AL is rearranged via a Mg-dependent methyl migration to produce 3-hydroxy-3-methyl-2-ketobutyrate (HMKB). In the reductase reaction, this 2-ketoacid undergoes a metal-dependent reduction by NADPH to yield (R)-2,3-dihydroxy-isovalerate. The protein is Ketol-acid reductoisomerase (NADP(+)) of Hyphomonas neptunium (strain ATCC 15444).